A 304-amino-acid chain; its full sequence is Dihydroorotate dehydrogenase B (NAD(+)), catalytic subunit (304 aa).

Residues Ser22 and 46–47 (KG) each bind FMN. Residues Lys46 and 70–74 (NSIGL) each bind substrate. Residues Asn100 and Asn128 each coordinate FMN. Asn128 contacts substrate. The Nucleophile role is filled by Cys131. Residues Lys166 and Ile192 each contribute to the FMN site. 193-194 (NT) lines the substrate pocket. FMN contacts are provided by residues Gly218, 244–245 (GG), and 266–267 (GT).

It belongs to the dihydroorotate dehydrogenase family. Type 1 subfamily. In terms of assembly, heterotetramer of 2 PyrK and 2 PyrD type B subunits. However, the metal reductase complex seems to be composed of a heterooctamer of 4 PyrK and 4 PyrD subunits. FMN is required as a cofactor.

The protein localises to the cytoplasm. The enzyme catalyses (S)-dihydroorotate + NAD(+) = orotate + NADH + H(+). It functions in the pathway pyrimidine metabolism; UMP biosynthesis via de novo pathway; orotate from (S)-dihydroorotate (NAD(+) route): step 1/1. Catalyzes the conversion of dihydroorotate to orotate with NAD(+) as electron acceptor. In terms of biological role, together with PyrK, also forms a metal reductase complex able to reduce Fe(III)-chelates to Fe(II)-chelates, as well as soluble Cr(VI) and U(VI), using NADH as electron donor. To a lesser extent, can also use NADPH as an electron donor. Is unable to reduce riboflavin and FMN with NADH as electron donor. May have an in vivo role in metal reduction in D.reducens, which is an organism capable of reducing contaminant heavy metals and radionuclides. The polypeptide is Dihydroorotate dehydrogenase B (NAD(+)), catalytic subunit (pyrD) (Desulforamulus reducens (strain ATCC BAA-1160 / DSM 100696 / MI-1) (Desulfotomaculum reducens)).